Here is a 518-residue protein sequence, read N- to C-terminus: Anthranilate synthase component 1 (518 aa).

L-tryptophan-binding positions include Ser-38 and 283-285 (PYM). Residue 324–325 (GT) participates in chorismate binding. A Mg(2+)-binding site is contributed by Glu-357. Chorismate contacts are provided by residues Tyr-445, Arg-465, 479-481 (GAG), and Gly-481. Glu-494 provides a ligand contact to Mg(2+).

The protein belongs to the anthranilate synthase component I family. As to quaternary structure, heterotetramer consisting of two non-identical subunits: a beta subunit (TrpG) and a large alpha subunit (TrpE). Mg(2+) is required as a cofactor.

It carries out the reaction chorismate + L-glutamine = anthranilate + pyruvate + L-glutamate + H(+). It functions in the pathway amino-acid biosynthesis; L-tryptophan biosynthesis; L-tryptophan from chorismate: step 1/5. Its activity is regulated as follows. Feedback inhibited by tryptophan. In terms of biological role, part of a heterotetrameric complex that catalyzes the two-step biosynthesis of anthranilate, an intermediate in the biosynthesis of L-tryptophan. In the first step, the glutamine-binding beta subunit (TrpG) of anthranilate synthase (AS) provides the glutamine amidotransferase activity which generates ammonia as a substrate that, along with chorismate, is used in the second step, catalyzed by the large alpha subunit of AS (TrpE) to produce anthranilate. In the absence of TrpG, TrpE can synthesize anthranilate directly from chorismate and high concentrations of ammonia. The protein is Anthranilate synthase component 1 (trpE) of Corynebacterium glutamicum (strain ATCC 13032 / DSM 20300 / JCM 1318 / BCRC 11384 / CCUG 27702 / LMG 3730 / NBRC 12168 / NCIMB 10025 / NRRL B-2784 / 534).